The chain runs to 390 residues: NADH-quinone oxidoreductase subunit D (390 aa).

The protein belongs to the complex I 49 kDa subunit family. In terms of assembly, NDH-1 is composed of 14 different subunits. Subunits NuoB, C, D, E, F, and G constitute the peripheral sector of the complex.

Its subcellular location is the cell membrane. It catalyses the reaction a quinone + NADH + 5 H(+)(in) = a quinol + NAD(+) + 4 H(+)(out). Functionally, NDH-1 shuttles electrons from NADH, via FMN and iron-sulfur (Fe-S) centers, to quinones in the respiratory chain. The immediate electron acceptor for the enzyme in this species is believed to be ubiquinone. Couples the redox reaction to proton translocation (for every two electrons transferred, four hydrogen ions are translocated across the cytoplasmic membrane), and thus conserves the redox energy in a proton gradient. The protein is NADH-quinone oxidoreductase subunit D of Wolbachia pipientis wMel.